Here is a 198-residue protein sequence, read N- to C-terminus: Cyclin-dependent kinase inhibitor 1B (198 aa).

The segment covering Met-1–Pro-11 has biased composition (polar residues). The segment at Met-1–Gly-34 is disordered. The residue at position 10 (Ser-10) is a Phosphoserine; by UHMK1. Residues Glu-14 to Lys-25 are compositionally biased toward basic and acidic residues. An interaction with CDK2 region spans residues Asp-51–Pro-91. The residue at position 74 (Tyr-74) is a Phosphotyrosine; by SRC. Residues Pro-85–Thr-198 form a disordered region. Tyr-88 is subject to Phosphotyrosine; by ABL, LYN and SRC. Tyr-89 carries the post-translational modification Phosphotyrosine. Residues Gln-104–Tyr-124 are compositionally biased toward polar residues. Residues Lys-153–Arg-169 carry the Nuclear localization signal motif. Residue Thr-170 is modified to Phosphothreonine. The span at Ser-175–Gln-186 shows a compositional bias: polar residues. The residue at position 187 (Thr-187) is a Phosphothreonine; by PKB/AKT1, CDK1 and CDK2. Thr-198 carries the phosphothreonine; by CaMK1, PKB/AKT1, RPS6KA1, RPS6KA3 and PIM1 modification.

It belongs to the CDI family. As to quaternary structure, forms a ternary complex composed of CCNE1, CDK2 and CDKN1B. Interacts directly with CCNE1; the interaction is inhibited by CDK2-dependent phosphorylation on Thr-187. Interacts with COPS5, subunit of the COP9 signalosome complex; the interaction leads to CDKN1B degradation. Interacts with NUP50; the interaction leads to nuclear import and degradation of phosphorylated CDKN1B. Interacts with CCND1 and SNX6. Interacts (Thr-198-phosphorylated form) with 14-3-3 proteins, binds strongly YWHAQ, weakly YWHAE and YWHAH, but not YWHAB nor YWHAZ; the interaction with YWHAQ results in translocation to the cytoplasm. Interacts with AKT1 and LYN; the interactions lead to cytoplasmic mislocation, phosphorylation of CDKN1B and inhibition of cell cycle arrest. Forms a ternary complex with CCNA2 and CDK2; CDKN1B inhibits the kinase activity of CDK2 through conformational rearrangements. Interacts (unphosphorylated form) with CDK2. Forms a complex with CDK2 and SPDYA, but does not directly interact with SPDYA. Forms a ternary complex composed of cyclin D, CDK4 and CDKN1B. Interacts (phosphorylated on Tyr-88 and Tyr-89) with CDK4; the interaction is required for cyclin D and CDK4 complex assembly, induces nuclear translocation and activates the CDK4 kinase activity. Interacts with GRB2. Interacts with PIM1. Identified in a complex with SKP1, SKP2 and CKS1B. Interacts with UHMK1; the interaction leads to cytoplasmic mislocation, phosphorylation of CDKN1B and inhibition of cell cycle arrest. Also interacts with CDK1. Dephosphorylated on Thr-187 by PPM1H, leading to CDKN1B stability. In terms of processing, phosphorylated; phosphorylation occurs on serine, threonine and tyrosine residues. Phosphorylation on Ser-10 is the major site of phosphorylation in resting cells, takes place at the G(0)-G(1) phase and leads to protein stability. Phosphorylation on other sites is greatly enhanced by mitogens, growth factors, cMYC and in certain cancer cell lines. The phosphorylated form found in the cytoplasm is inactivate. Phosphorylation on Thr-198 is required for interaction with 14-3-3 proteins. Phosphorylation on Thr-187, by CDK1 and CDK2 leads to protein ubiquitination and proteasomal degradation. Tyrosine phosphorylation promotes this process. Phosphorylation by PKB/AKT1 can be suppressed by LY294002, an inhibitor of the catalytic subunit of PI3K. Phosphorylation on Tyr-88 and Tyr-89 has no effect on binding CDK2, but is required for binding CDK4. Dephosphorylated on tyrosine residues by G-CSF. Dephosphorylated on Thr-187 by PPM1H, leading to CDKN1B stability. Post-translationally, ubiquitinated; in the cytoplasm by the KPC complex (composed of RNF123/KPC1 and UBAC1/KPC2) and, in the nucleus, by SCF(SKP2). The latter requires prior phosphorylation on Thr-187. Ubiquitinated; by a TRIM21-containing SCF(SKP2)-like complex; leads to its degradation. Subject to degradation in the lysosome. Interaction with SNX6 promotes lysosomal degradation.

The protein localises to the nucleus. Its subcellular location is the cytoplasm. The protein resides in the endosome. In terms of biological role, important regulator of cell cycle progression. Inhibits the kinase activity of CDK2 bound to cyclin A, but has little inhibitory activity on CDK2 bound to SPDYA. Involved in G1 arrest. Potent inhibitor of cyclin E- and cyclin A-CDK2 complexes. Forms a complex with cyclin type D-CDK4 complexes and is involved in the assembly, stability, and modulation of CCND1-CDK4 complex activation. Acts either as an inhibitor or an activator of cyclin type D-CDK4 complexes depending on its phosphorylation state and/or stoichometry. The protein is Cyclin-dependent kinase inhibitor 1B (CDKN1B) of Cricetulus griseus (Chinese hamster).